The sequence spans 347 residues: MIPATCTLSQITARLGGEWRGEDISVTAVRPLADAQAEHISFLANPKYKAEVHDSSAGAIIVSAKAADGFEGRNLIVADDPYLYFAKVARLFSPVVKARGGIHPTAVVEPGATVPASCEIGANAYIGANTVLGEGCRILANAVVQHDCKLGDEVVLHPNAVVYYGCTLGRHVEIHSGAVIGADGFGLAFAGDSWFKIPQTGAVTLGDDVEIGSNTNIDRGAMSDTTVGNGTKIDNQVQIGHNCKIGSHTVIAAKTGISGSVTIGSYCIIGGGVGTVGHIEIADKTTIGGGTSVTHSITESGKHLAGIFPMSEHKEWARNAVYIHRLSEMNKRLKTLEQQLSDSKDTQ.

The active-site Proton acceptor is the H241.

This sequence belongs to the transferase hexapeptide repeat family. LpxD subfamily. As to quaternary structure, homotrimer.

It catalyses the reaction a UDP-3-O-[(3R)-3-hydroxyacyl]-alpha-D-glucosamine + a (3R)-hydroxyacyl-[ACP] = a UDP-2-N,3-O-bis[(3R)-3-hydroxyacyl]-alpha-D-glucosamine + holo-[ACP] + H(+). It functions in the pathway bacterial outer membrane biogenesis; LPS lipid A biosynthesis. Functionally, catalyzes the N-acylation of UDP-3-O-acylglucosamine using 3-hydroxyacyl-ACP as the acyl donor. Is involved in the biosynthesis of lipid A, a phosphorylated glycolipid that anchors the lipopolysaccharide to the outer membrane of the cell. The polypeptide is UDP-3-O-acylglucosamine N-acyltransferase (Neisseria gonorrhoeae (strain ATCC 700825 / FA 1090)).